Reading from the N-terminus, the 274-residue chain is Small ribosomal subunit biogenesis GTPase RsgA (274 aa).

A CP-type G domain is found at 58 to 215; that stretch reads KNYLNRPKVA…LVDSPGFSIY (158 aa). GTP is bound by residues 108-111 and 158-166; these read SKLD and GHSGVGKST. Residues cysteine 238, cysteine 243, histidine 245, and cysteine 252 each coordinate Zn(2+).

The protein belongs to the TRAFAC class YlqF/YawG GTPase family. RsgA subfamily. In terms of assembly, monomer. Associates with 30S ribosomal subunit, binds 16S rRNA. It depends on Zn(2+) as a cofactor.

The protein resides in the cytoplasm. Its function is as follows. One of several proteins that assist in the late maturation steps of the functional core of the 30S ribosomal subunit. Helps release RbfA from mature subunits. May play a role in the assembly of ribosomal proteins into the subunit. Circularly permuted GTPase that catalyzes slow GTP hydrolysis, GTPase activity is stimulated by the 30S ribosomal subunit. This chain is Small ribosomal subunit biogenesis GTPase RsgA, found in Mycoplasmoides gallisepticum (strain R(low / passage 15 / clone 2)) (Mycoplasma gallisepticum).